The sequence spans 252 residues: MSRKPIIAGNWKMNKTLSEAQAFVEAVKNNLPSSDNVESVIGAPALFLAPMAYLRQGSELKLAAENSYFENAGAFTGENSPAAIVDLGVEYIIIGHSERREYFHETDEDINKKAKAIFAAGATPILCCGETLETFEAGKTAEWVSGQIEAGLAGLSAEQVSNLVIAYEPIWAIGTGKTATNEIADETCGVVRSTVEKLYGKEVSEAVRIQYGGSVKPETIEGLMAKENIDGALVGGASLEADSFLALLEMYK.

10 to 12 (NWK) is a substrate binding site. The Electrophile role is filled by His96. Glu168 (proton acceptor) is an active-site residue. Substrate-binding positions include Gly174, Ser214, and 235 to 236 (GG).

Belongs to the triosephosphate isomerase family. In terms of assembly, homodimer.

It localises to the cytoplasm. The catalysed reaction is D-glyceraldehyde 3-phosphate = dihydroxyacetone phosphate. It functions in the pathway carbohydrate biosynthesis; gluconeogenesis. It participates in carbohydrate degradation; glycolysis; D-glyceraldehyde 3-phosphate from glycerone phosphate: step 1/1. In terms of biological role, involved in the gluconeogenesis. Catalyzes stereospecifically the conversion of dihydroxyacetone phosphate (DHAP) to D-glyceraldehyde-3-phosphate (G3P). In Lactococcus lactis subsp. lactis (strain IL1403) (Streptococcus lactis), this protein is Triosephosphate isomerase.